Here is a 514-residue protein sequence, read N- to C-terminus: 2,3-bisphosphoglycerate-independent phosphoglycerate mutase (514 aa).

The Mn(2+) site is built by aspartate 14 and serine 64. Serine 64 functions as the Phosphoserine intermediate in the catalytic mechanism. Substrate contacts are provided by residues histidine 125, 155–156 (RD), arginine 187, arginine 193, 263–266 (RADR), and lysine 336. Mn(2+) is bound by residues aspartate 403, histidine 407, aspartate 444, histidine 445, and histidine 463.

This sequence belongs to the BPG-independent phosphoglycerate mutase family. As to quaternary structure, monomer. Mn(2+) is required as a cofactor.

The catalysed reaction is (2R)-2-phosphoglycerate = (2R)-3-phosphoglycerate. It functions in the pathway carbohydrate degradation; glycolysis; pyruvate from D-glyceraldehyde 3-phosphate: step 3/5. Its function is as follows. Catalyzes the interconversion of 2-phosphoglycerate and 3-phosphoglycerate. This is 2,3-bisphosphoglycerate-independent phosphoglycerate mutase from Shewanella halifaxensis (strain HAW-EB4).